A 395-amino-acid polypeptide reads, in one-letter code: Bone morphogenetic protein 2 (395 aa).

Residues 1–23 form the signal peptide; it reads MVAGTRCLLALLLPQVLLGGAAG. A propeptide spans 24 to 281 (cleaved by PCSK5); that stretch reads LIPELGRRKF…GHPLHRREKR (258 aa). Serine 86 carries the post-translational modification Phosphoserine. N-linked (GlcNAc...) asparagine glycans are attached at residues asparagine 134 and asparagine 199. Residues 270 to 292 are disordered; the sequence is GKGHPLHRREKRQAKHKQRKRLK. The span at 273–292 shows a compositional bias: basic residues; that stretch reads HPLHRREKRQAKHKQRKRLK. Disulfide bonds link cysteine 295-cysteine 360, cysteine 324-cysteine 392, and cysteine 328-cysteine 394. Asparagine 337 carries N-linked (GlcNAc...) asparagine glycosylation.

This sequence belongs to the TGF-beta family. Homodimer; disulfide-linked. Interacts with SOSTDC1. Interacts with GREM2, RGMA, RGMB and RGMC. Interacts with ASPN. Interacts with MAFP5. Interacts with FBN1 (via N-terminal domain) and FBN2. Interacts with type I receptor BMPR1A. Interacts with type II receptor BMPR2. Interacts with SCUBE3. Interacts with TNFAIP6 (primarily via Link domain); this interaction is inhibited by hyaluronan. Interacts with ERFE. Interacts with BMPR1A/ALK3; the interaction may induce HAMP expression. Forms heterodimers with BMP6 in vitro; the heterodimer then binds to its receptor BMPR1A /ALK3 and may induce HAMP expression. Interacts with TGFBR3.

Its subcellular location is the secreted. Functionally, growth factor of the TGF-beta superfamily that plays essential roles in many developmental processes, including cardiogenesis, neurogenesis, and osteogenesis. Induces cartilage and bone formation. Initiates the canonical BMP signaling cascade by associating with type I receptor BMPR1A and type II receptor BMPR2. Once all three components are bound together in a complex at the cell surface, BMPR2 phosphorylates and activates BMPR1A. In turn, BMPR1A propagates signal by phosphorylating SMAD1/5/8 that travel to the nucleus and act as activators and repressors of transcription of target genes. Also acts to promote expression of HAMP, via the interaction with its receptor BMPR1A/ALK3. Can also signal through non-canonical pathways such as ERK/MAP kinase signaling cascade that regulates osteoblast differentiation. Also stimulates the differentiation of myoblasts into osteoblasts via the EIF2AK3-EIF2A-ATF4 pathway by stimulating EIF2A phosphorylation which leads to increased expression of ATF4 which plays a central role in osteoblast differentiation. Acts as a positive regulator of odontoblast differentiation during mesenchymal tooth germ formation, expression is repressed during the bell stage by MSX1-mediated inhibition of CTNNB1 signaling. The sequence is that of Bone morphogenetic protein 2 (BMP2) from Oryctolagus cuniculus (Rabbit).